A 223-amino-acid chain; its full sequence is Cytotoxic T-lymphocyte protein 4 (223 aa).

Positions 1–35 are cleaved as a signal peptide; it reads MAGFGFRRHGVQPDLASRTWPCTALFSLLFIPVFS. At 36–161 the chain is on the extracellular side; it reads KGMHAAQPAV…IDPEPCPDSD (126 aa). An Ig-like V-type domain is found at 39–140; that stretch reads HAAQPAVVLA…VELMYPPPYY (102 aa). The interval 46 to 50 is homodimerization; sequence VLASS. 2 cysteine pairs are disulfide-bonded: Cys-58–Cys-129 and Cys-85–Cys-103. An N-linked (GlcNAc...) asparagine glycan is attached at Asn-113. An important for interaction with CD80 and CD86 region spans residues 134-139; it reads MYPPPY. Asn-145 carries an N-linked (GlcNAc...) asparagine glycan. Residues 150–155 are homodimerization; it reads YVIDPE. Residues 162 to 182 form a helical membrane-spanning segment; that stretch reads FLLWILAAVSSGLFFYSFLIT. Residues 183-223 are Cytoplasmic-facing; sequence AVSLSKMLKKRSPLTTGVYVKMPPTGPECEKQFQPYFIPIN. Tyr-201 carries the phosphotyrosine; by TXK and JAK2 modification.

As to quaternary structure, homodimer; disulfide-linked. Binds to CD80/B7-1 and CD86/B7.2. Interacts with ICOSLG. In terms of processing, N-glycosylation is important for dimerization. Phosphorylation at Tyr-201 prevents binding to the AP-2 adapter complex, blocks endocytosis, and leads to retention of CTLA4 on the cell surface.

It localises to the cell membrane. Its function is as follows. Inhibitory receptor acting as a major negative regulator of T-cell responses. The affinity of CTLA4 for its natural B7 family ligands, CD80 and CD86, is considerably stronger than the affinity of their cognate stimulatory coreceptor CD28. The polypeptide is Cytotoxic T-lymphocyte protein 4 (CTLA4) (Canis lupus familiaris (Dog)).